The chain runs to 193 residues: ATP-dependent protease subunit HslV (193 aa).

The active site involves T12. A167, C170, and T173 together coordinate Na(+).

The protein belongs to the peptidase T1B family. HslV subfamily. In terms of assembly, a double ring-shaped homohexamer of HslV is capped on each side by a ring-shaped HslU homohexamer. The assembly of the HslU/HslV complex is dependent on binding of ATP.

Its subcellular location is the cytoplasm. It carries out the reaction ATP-dependent cleavage of peptide bonds with broad specificity.. Its activity is regulated as follows. Allosterically activated by HslU binding. Functionally, protease subunit of a proteasome-like degradation complex believed to be a general protein degrading machinery. This is ATP-dependent protease subunit HslV from Bartonella henselae (strain ATCC 49882 / DSM 28221 / CCUG 30454 / Houston 1) (Rochalimaea henselae).